The sequence spans 475 residues: ATP synthase subunit beta (475 aa).

154–161 contacts ATP; it reads GGAGVGKT.

The protein belongs to the ATPase alpha/beta chains family. In terms of assembly, F-type ATPases have 2 components, CF(1) - the catalytic core - and CF(0) - the membrane proton channel. CF(1) has five subunits: alpha(3), beta(3), gamma(1), delta(1), epsilon(1). CF(0) has three main subunits: a(1), b(2) and c(9-12). The alpha and beta chains form an alternating ring which encloses part of the gamma chain. CF(1) is attached to CF(0) by a central stalk formed by the gamma and epsilon chains, while a peripheral stalk is formed by the delta and b chains.

The protein resides in the cell inner membrane. It catalyses the reaction ATP + H2O + 4 H(+)(in) = ADP + phosphate + 5 H(+)(out). Functionally, produces ATP from ADP in the presence of a proton gradient across the membrane. The catalytic sites are hosted primarily by the beta subunits. This is ATP synthase subunit beta from Hyphomonas neptunium (strain ATCC 15444).